Reading from the N-terminus, the 271-residue chain is Type III pantothenate kinase (271 aa).

ATP is bound at residue 6 to 13 (DVRNTHTV). 109–112 (GADR) provides a ligand contact to substrate. Asp-111 serves as the catalytic Proton acceptor. K(+) is bound at residue Asp-131. Ser-134 contacts ATP. A substrate-binding site is contributed by Thr-186.

This sequence belongs to the type III pantothenate kinase family. In terms of assembly, homodimer. The cofactor is NH4(+). It depends on K(+) as a cofactor.

The protein resides in the cytoplasm. The catalysed reaction is (R)-pantothenate + ATP = (R)-4'-phosphopantothenate + ADP + H(+). It participates in cofactor biosynthesis; coenzyme A biosynthesis; CoA from (R)-pantothenate: step 1/5. Functionally, catalyzes the phosphorylation of pantothenate (Pan), the first step in CoA biosynthesis. This is Type III pantothenate kinase from Mycolicibacterium vanbaalenii (strain DSM 7251 / JCM 13017 / BCRC 16820 / KCTC 9966 / NRRL B-24157 / PYR-1) (Mycobacterium vanbaalenii).